A 203-amino-acid polypeptide reads, in one-letter code: Dephospho-CoA kinase (203 aa).

A DPCK domain is found at 10–203 (IIGITGNIGS…LTGGAKGGRG (194 aa)). 18-23 (GSGKST) contacts ATP.

The protein belongs to the CoaE family.

The protein localises to the cytoplasm. It carries out the reaction 3'-dephospho-CoA + ATP = ADP + CoA + H(+). It functions in the pathway cofactor biosynthesis; coenzyme A biosynthesis; CoA from (R)-pantothenate: step 5/5. Its function is as follows. Catalyzes the phosphorylation of the 3'-hydroxyl group of dephosphocoenzyme A to form coenzyme A. The sequence is that of Dephospho-CoA kinase from Thermus thermophilus (strain ATCC BAA-163 / DSM 7039 / HB27).